The chain runs to 485 residues: Ribulose bisphosphate carboxylase large chain (485 aa).

The propeptide occupies 1–2 (MS). The residue at position 3 (Pro3) is an N-acetylproline. Lys14 is modified (N6,N6,N6-trimethyllysine). Residues Asn123 and Thr173 each coordinate substrate. Lys175 (proton acceptor) is an active-site residue. Substrate is bound at residue Lys177. Positions 201, 203, and 204 each coordinate Mg(2+). Position 201 is an N6-carboxylysine (Lys201). The Proton acceptor role is filled by His294. The substrate site is built by Arg295, His327, and Ser379.

This sequence belongs to the RuBisCO large chain family. Type I subfamily. Heterohexadecamer of 8 large chains and 8 small chains; disulfide-linked. The disulfide link is formed within the large subunit homodimers. It depends on Mg(2+) as a cofactor. The disulfide bond which can form in the large chain dimeric partners within the hexadecamer appears to be associated with oxidative stress and protein turnover.

It is found in the plastid. Its subcellular location is the chloroplast. It carries out the reaction 2 (2R)-3-phosphoglycerate + 2 H(+) = D-ribulose 1,5-bisphosphate + CO2 + H2O. The catalysed reaction is D-ribulose 1,5-bisphosphate + O2 = 2-phosphoglycolate + (2R)-3-phosphoglycerate + 2 H(+). In terms of biological role, ruBisCO catalyzes two reactions: the carboxylation of D-ribulose 1,5-bisphosphate, the primary event in carbon dioxide fixation, as well as the oxidative fragmentation of the pentose substrate in the photorespiration process. Both reactions occur simultaneously and in competition at the same active site. The polypeptide is Ribulose bisphosphate carboxylase large chain (Helianthus annuus (Common sunflower)).